The chain runs to 916 residues: Protein translocase subunit SecA (916 aa).

Residues Q87, 105 to 109, and D507 each bind ATP; that span reads GEGKT. Zn(2+)-binding residues include C900, C902, C911, and H912.

It belongs to the SecA family. In terms of assembly, monomer and homodimer. Part of the essential Sec protein translocation apparatus which comprises SecA, SecYEG and auxiliary proteins SecDF-YajC and YidC. Zn(2+) is required as a cofactor.

It localises to the cell inner membrane. Its subcellular location is the cytoplasm. It carries out the reaction ATP + H2O + cellular proteinSide 1 = ADP + phosphate + cellular proteinSide 2.. Functionally, part of the Sec protein translocase complex. Interacts with the SecYEG preprotein conducting channel. Has a central role in coupling the hydrolysis of ATP to the transfer of proteins into and across the cell membrane, serving both as a receptor for the preprotein-SecB complex and as an ATP-driven molecular motor driving the stepwise translocation of polypeptide chains across the membrane. This is Protein translocase subunit SecA from Neisseria meningitidis serogroup B (strain ATCC BAA-335 / MC58).